A 253-amino-acid polypeptide reads, in one-letter code: Phosphate import ATP-binding protein PstB (253 aa).

The ABC transporter domain maps to 7–249 (ASAKNLNLWY…PQSSKTKRYI (243 aa)). 39–46 (GPSGCGKS) provides a ligand contact to ATP.

This sequence belongs to the ABC transporter superfamily. Phosphate importer (TC 3.A.1.7) family. As to quaternary structure, the complex is composed of two ATP-binding proteins (PstB), two transmembrane proteins (PstC and PstA) and a solute-binding protein (PstS).

It localises to the cell inner membrane. It carries out the reaction phosphate(out) + ATP + H2O = ADP + 2 phosphate(in) + H(+). In terms of biological role, part of the ABC transporter complex PstSACB involved in phosphate import. Responsible for energy coupling to the transport system. This chain is Phosphate import ATP-binding protein PstB, found in Ehrlichia ruminantium (strain Gardel).